The sequence spans 475 residues: Aspartyl/glutamyl-tRNA(Asn/Gln) amidotransferase subunit B (475 aa).

This sequence belongs to the GatB/GatE family. GatB subfamily. As to quaternary structure, heterotrimer of A, B and C subunits.

The catalysed reaction is L-glutamyl-tRNA(Gln) + L-glutamine + ATP + H2O = L-glutaminyl-tRNA(Gln) + L-glutamate + ADP + phosphate + H(+). It carries out the reaction L-aspartyl-tRNA(Asn) + L-glutamine + ATP + H2O = L-asparaginyl-tRNA(Asn) + L-glutamate + ADP + phosphate + 2 H(+). Functionally, allows the formation of correctly charged Asn-tRNA(Asn) or Gln-tRNA(Gln) through the transamidation of misacylated Asp-tRNA(Asn) or Glu-tRNA(Gln) in organisms which lack either or both of asparaginyl-tRNA or glutaminyl-tRNA synthetases. The reaction takes place in the presence of glutamine and ATP through an activated phospho-Asp-tRNA(Asn) or phospho-Glu-tRNA(Gln). The chain is Aspartyl/glutamyl-tRNA(Asn/Gln) amidotransferase subunit B from Chlorobium limicola (strain DSM 245 / NBRC 103803 / 6330).